Consider the following 853-residue polypeptide: Envelope glycoprotein gp160 (853 aa).

The N-terminal stretch at 1-31 (MRARGIERNCQNWWKWGIMLLGILMTCSAAD) is a signal peptide. The Extracellular portion of the chain corresponds to 32–681 (NLWVTVYYGV…ITQWLWYIKI (650 aa)). An intrachain disulfide couples Cys-53 to Cys-73. N-linked (GlcNAc...) asparagine; by host glycosylation is found at Asn-87, Asn-129, Asn-137, Asn-143, Asn-153, Asn-157, Asn-183, Asn-188, Asn-198, Asn-235, Asn-242, Asn-263, Asn-277, and Asn-290. Disulfide bonds link Cys-118–Cys-206, Cys-125–Cys-197, Cys-130–Cys-154, Cys-219–Cys-248, and Cys-229–Cys-240. Residues 130–153 (CSDELRNNGTMGNNVTTEEKGMKN) are V1. Residues 154 to 197 (CSFNVTTVLKDKKQQVYALFYRLDIVPIDNDSSTNSTNYRLINC) are V2. A V3 region spans residues 297 to 329 (CARPYQNTRQRTPIGLGQSLYTTRSRSIIGQAH). A disulfide bond links Cys-297 and Cys-330. N-linked (GlcNAc...) asparagine; by host glycosylation is found at Asn-331 and Asn-353. A CD4-binding loop region spans residues 362-372 (SSGGDPEITTH). Intrachain disulfides connect Cys-376-Cys-442 and Cys-383-Cys-416. The V4 stretch occupies residues 383–416 (CNTSGLFNSTWNISAWNNITESNNSTNTNITLQC). Residues Asn-384, Asn-390, Asn-394, Asn-400, Asn-405, Asn-406, Asn-411, Asn-445, Asn-458, Asn-459, and Asn-462 are each glycosylated (N-linked (GlcNAc...) asparagine; by host). 2 V5 regions span residues 457–468 (INNSTNETFRPG) and 460–468 (STNETFRPG). Residues 509–529 (AIGLGAMFLGFLGAAGSTMGA) are fusion peptide. The segment at 571–589 (KQLQARILAVERYLKDQQL) is immunosuppression. A disulfide bond links Cys-595 and Cys-601. Asn-608, Asn-613, Asn-622, and Asn-634 each carry an N-linked (GlcNAc...) asparagine; by host glycan. Positions 630–664 (REIDNYTGLIYSLIEESQTQQEKNEKELLELDKWA) form a coiled coil. The interval 659 to 680 (ELDKWASLWNWFSITQWLWYIK) is MPER; binding to GalCer. A helical transmembrane segment spans residues 682-702 (FIMIIGGLIGLRIVFAVLSLV). Residues 703–853 (NRVRQGYSPL…IRQGLERSLL (151 aa)) are Cytoplasmic-facing. The YXXL motif; contains endocytosis signal signature appears at 709–712 (YSPL). A disordered region spans residues 716-738 (TLLPAPRGPDRPEGTEEEGGERG). Over residues 723–738 (GPDRPEGTEEEGGERG) the composition is skewed to basic and acidic residues. 2 S-palmitoyl cysteine; by host lipidation sites follow: Cys-761 and Cys-834. Residues 852-853 (LL) carry the Di-leucine internalization motif motif.

It belongs to the HIV-1 env protein family. In terms of assembly, the mature envelope protein (Env) consists of a homotrimer of non-covalently associated gp120-gp41 heterodimers. The resulting complex protrudes from the virus surface as a spike. There seems to be as few as 10 spikes on the average virion. Interacts with host CD4, CCR5 and CXCR4. Gp120 also interacts with the C-type lectins CD209/DC-SIGN and CLEC4M/DC-SIGNR (collectively referred to as DC-SIGN(R)). Gp120 and gp41 interact with GalCer. Gp120 interacts with host ITGA4/ITGB7 complex; on CD4+ T-cells, this interaction results in rapid activation of integrin ITGAL/LFA-1, which facilitates efficient cell-to-cell spreading of HIV-1. Gp120 interacts with cell-associated heparan sulfate; this interaction increases virus infectivity on permissive cells and may be involved in infection of CD4- cells. As to quaternary structure, the mature envelope protein (Env) consists of a homotrimer of non-covalently associated gp120-gp41 heterodimers. The resulting complex protrudes from the virus surface as a spike. There seems to be as few as 10 spikes on the average virion. Highly glycosylated by host. The high number of glycan on the protein is reffered to as 'glycan shield' because it contributes to hide protein sequence from adaptive immune system. In terms of processing, palmitoylation of the transmembrane protein and of Env polyprotein (prior to its proteolytic cleavage) is essential for their association with host cell membrane lipid rafts. Palmitoylation is therefore required for envelope trafficking to classical lipid rafts, but not for viral replication. Post-translationally, specific enzymatic cleavages in vivo yield mature proteins. Envelope glycoproteins are synthesized as an inactive precursor that is heavily N-glycosylated and processed likely by host cell furin in the Golgi to yield the mature SU and TM proteins. The cleavage site between SU and TM requires the minimal sequence [KR]-X-[KR]-R. About 2 of the 9 disulfide bonds of gp41 are reduced by P4HB/PDI, following binding to CD4 receptor.

It localises to the virion membrane. The protein resides in the host cell membrane. It is found in the host endosome membrane. Oligomerizes in the host endoplasmic reticulum into predominantly trimers. In a second time, gp160 transits in the host Golgi, where glycosylation is completed. The precursor is then proteolytically cleaved in the trans-Golgi and thereby activated by cellular furin or furin-like proteases to produce gp120 and gp41. In terms of biological role, attaches the virus to the host lymphoid cell by binding to the primary receptor CD4. This interaction induces a structural rearrangement creating a high affinity binding site for a chemokine coreceptor like CXCR4 and/or CCR5. Acts as a ligand for CD209/DC-SIGN and CLEC4M/DC-SIGNR, which are respectively found on dendritic cells (DCs), and on endothelial cells of liver sinusoids and lymph node sinuses. These interactions allow capture of viral particles at mucosal surfaces by these cells and subsequent transmission to permissive cells. HIV subverts the migration properties of dendritic cells to gain access to CD4+ T-cells in lymph nodes. Virus transmission to permissive T-cells occurs either in trans (without DCs infection, through viral capture and transmission), or in cis (following DCs productive infection, through the usual CD4-gp120 interaction), thereby inducing a robust infection. In trans infection, bound virions remain infectious over days and it is proposed that they are not degraded, but protected in non-lysosomal acidic organelles within the DCs close to the cell membrane thus contributing to the viral infectious potential during DCs' migration from the periphery to the lymphoid tissues. On arrival at lymphoid tissues, intact virions recycle back to DCs' cell surface allowing virus transmission to CD4+ T-cells. Its function is as follows. Acts as a class I viral fusion protein. Under the current model, the protein has at least 3 conformational states: pre-fusion native state, pre-hairpin intermediate state, and post-fusion hairpin state. During fusion of viral and target intracellular membranes, the coiled coil regions (heptad repeats) assume a trimer-of-hairpins structure, positioning the fusion peptide in close proximity to the C-terminal region of the ectodomain. The formation of this structure appears to drive apposition and subsequent fusion of viral and target cell membranes. Complete fusion occurs in host cell endosomes and is dynamin-dependent, however some lipid transfer might occur at the plasma membrane. The virus undergoes clathrin-dependent internalization long before endosomal fusion, thus minimizing the surface exposure of conserved viral epitopes during fusion and reducing the efficacy of inhibitors targeting these epitopes. Membranes fusion leads to delivery of the nucleocapsid into the cytoplasm. The protein is Envelope glycoprotein gp160 of Human immunodeficiency virus type 1 group M subtype D (isolate ELI) (HIV-1).